Reading from the N-terminus, the 497-residue chain is MEGVGGGGGGEEWLRPMDAEQLRECGHRMVDFVADYYKSIEAFPVLSQVQPGYLKEVLPDSAPRQPDTLDSLFDDIQQKIIPGVTHWQSPNYFAYYPSNSSTAGFLGEMLSAAFNIVGFSWITSPAATELEVIVLDWFAKMLQLPSQFLSTALGGGVIQGTASEAVLVALLAARDRALKKHGKHSLEKLVVYASDQTHSALQKACQIAGIFSENVRVVIADCNKNYAVAPEAVSEALSIDLSSGLIPFFICATVGTTSSSAVDPLPELGQIAKSNDMWFHIDAAYAGSACICPEYRHHLNGVEEADSFNMNAHKWFLTNFDCSLLWVKDRSFLIQSLSTNPEFLKNKASQANSVVDFKDWQIPLGRRFRSLKLWMVLRLYGVDNLQSYIRKHIHLAEHFEQLLLSDSRFEVVTPRTFSLVCFRLVPPTSDHENGRKLNYDMMDGVNSSGKIFLSHTVLSGKFVLRFAVGAPLTEERHVDAAWKLLRDEATKVLGKMV.

Residues Ala-162, Ser-163, Thr-257, and Asn-311 each coordinate pyridoxal 5'-phosphate. Lys-314 carries the post-translational modification N6-(pyridoxal phosphate)lysine.

This sequence belongs to the group II decarboxylase family. Requires pyridoxal 5'-phosphate as cofactor.

It carries out the reaction L-tryptophan + H(+) = tryptamine + CO2. Functionally, involved in serotonin biosynthesis. Catalyzes the decarboxylation of L-tryptophan to tryptamine, which is converted to serotonin by tryptamine 5-hydroxylase. May play a minor role in serotonin biosynthetis during senescence. Accumulation of serotonin attenuates leaf senescence. This chain is Tryptophan decarboxylase 2, found in Oryza sativa subsp. japonica (Rice).